Reading from the N-terminus, the 216-residue chain is Probable methylthioribulose-1-phosphate dehydratase (216 aa).

Residue Cys87 coordinates substrate. The Zn(2+) site is built by His105 and His107. Glu129 acts as the Proton donor/acceptor in catalysis.

It belongs to the aldolase class II family. MtnB subfamily. Zn(2+) serves as cofactor.

The protein localises to the cytoplasm. The catalysed reaction is 5-(methylsulfanyl)-D-ribulose 1-phosphate = 5-methylsulfanyl-2,3-dioxopentyl phosphate + H2O. It functions in the pathway amino-acid biosynthesis; L-methionine biosynthesis via salvage pathway; L-methionine from S-methyl-5-thio-alpha-D-ribose 1-phosphate: step 2/6. In terms of biological role, catalyzes the dehydration of methylthioribulose-1-phosphate (MTRu-1-P) into 2,3-diketo-5-methylthiopentyl-1-phosphate (DK-MTP-1-P). This is Probable methylthioribulose-1-phosphate dehydratase from Drosophila persimilis (Fruit fly).